The primary structure comprises 177 residues: Small ribosomal subunit protein eS10z (177 aa).

Residues 90 to 177 (TLKKSAKPGG…AAAPSGSGFP (88 aa)) form a disordered region. Positions 108 to 140 (DRQRGPPRSDGDRPRFGDRDGYRGGPRGGDEKG) are enriched in basic and acidic residues. A compositionally biased stretch (low complexity) spans 141 to 150 (GAPADFQPSF). A compositionally biased stretch (gly residues) spans 151–165 (QGGGGRPGFGRGAGG). Residues 166 to 177 (YSAAAPSGSGFP) show a composition bias toward low complexity.

This sequence belongs to the eukaryotic ribosomal protein eS10 family.

It localises to the cytoplasm. The sequence is that of Small ribosomal subunit protein eS10z (RPS10A) from Arabidopsis thaliana (Mouse-ear cress).